The following is an 810-amino-acid chain: Probable dehydratase YbiW (810 aa).

Residues 11-682 enclose the PFL domain; the sequence is DRIKAHKNAL…QTMATPDGRK (672 aa). Residues 677–699 are disordered; sequence TPDGRKAHTPLAEGASPASGTDH. A Glycine radical domain is found at 689–810; the sequence is EGASPASGTD…DIIARTEHML (122 aa). Gly-786 is modified (glycine radical).

This sequence belongs to the glycyl radical enzyme (GRE) family.

Probably shows dehydratase activity. The sequence is that of Probable dehydratase YbiW (ybiW) from Escherichia coli (strain K12).